The chain runs to 1470 residues: Rap guanine nucleotide exchange factor (1470 aa).

Disordered regions lie at residues 130–227 (PTEP…SYND) and 250–313 (HRRE…GGFM). Residues 173-183 (MPPPPVPPRPL) show a composition bias toward pro residues. 2 stretches are compositionally biased toward low complexity: residues 184 to 193 (RLPQTAAKGP) and 215 to 224 (TTSSSSSNTS). Polar residues predominate over residues 256-266 (NSVGGQAQNGI). The span at 275-292 (RSTASSTTTEGETASNEG) shows a compositional bias: low complexity. 347–463 (AFAALPMSIK…IEKDRDGLTG (117 aa)) is a binding site for a nucleoside 3',5'-cyclic phosphate. Positions 478 to 592 (CGQVLIKGKP…SLLNIACSVK (115 aa)) constitute an N-terminal Ras-GEF domain. Positions 597 to 679 (QVILTRRKDD…LTLMLKNNVL (83 aa)) constitute a PDZ domain. The region spanning 782 to 869 (PEHVLKIYRN…SRYYLKNNSR (88 aa)) is the Ras-associating domain. The region spanning 894–1124 (NAQVVAAQLT…FENSNVATMR (231 aa)) is the Ras-GEF domain. Residues 1176-1189 (QTAHRGANSSSTAN) show a composition bias toward polar residues. 4 disordered regions span residues 1176–1213 (QTAH…DQSS), 1253–1326 (KVKG…NIPP), 1347–1370 (VIPT…PASS), and 1422–1455 (ATLP…RMGT). A compositionally biased stretch (low complexity) spans 1198–1211 (PSSLSSQSAGSADQ). Polar residues-rich tracts occupy residues 1260 to 1274 (QITS…SLQR) and 1282 to 1308 (RQAT…YQSD). Over residues 1309-1321 (NGRRQRSGSEGRF) the composition is skewed to basic and acidic residues. Positions 1349–1370 (PTHPHGHSPTSPRCRSRSPASS) are enriched in low complexity.

The protein belongs to the RAPGEF2 family. Expressed in hermaphrodite-specific neurons (HSNs), oviduct sheath cells and lateral seam cells.

Acts as a guanine nucleotide exchange factor for small G protein GTPases like rap-1 and rap-2. Required in the hypodermis, especially in the seam cells, for proper formation of the cuticle. The chain is Rap guanine nucleotide exchange factor (pxf-1) from Caenorhabditis elegans.